We begin with the raw amino-acid sequence, 138 residues long: Phosphoribosyl-AMP cyclohydrolase (138 aa).

Residue D85 participates in Mg(2+) binding. C86 is a binding site for Zn(2+). D87 and D89 together coordinate Mg(2+). Zn(2+)-binding residues include C102 and C109.

Belongs to the PRA-CH family. Homodimer. The cofactor is Mg(2+). Requires Zn(2+) as cofactor.

It is found in the cytoplasm. It carries out the reaction 1-(5-phospho-beta-D-ribosyl)-5'-AMP + H2O = 1-(5-phospho-beta-D-ribosyl)-5-[(5-phospho-beta-D-ribosylamino)methylideneamino]imidazole-4-carboxamide. It participates in amino-acid biosynthesis; L-histidine biosynthesis; L-histidine from 5-phospho-alpha-D-ribose 1-diphosphate: step 3/9. Functionally, catalyzes the hydrolysis of the adenine ring of phosphoribosyl-AMP. This chain is Phosphoribosyl-AMP cyclohydrolase, found in Methanothermobacter thermautotrophicus (strain ATCC 29096 / DSM 1053 / JCM 10044 / NBRC 100330 / Delta H) (Methanobacterium thermoautotrophicum).